A 425-amino-acid chain; its full sequence is Enolase (425 aa).

Gln-162 lines the (2R)-2-phosphoglycerate pocket. The active-site Proton donor is the Glu-204. Asp-241, Glu-282, and Asp-309 together coordinate Mg(2+). (2R)-2-phosphoglycerate contacts are provided by Lys-334, Arg-363, Ser-364, and Lys-385. Lys-334 serves as the catalytic Proton acceptor.

This sequence belongs to the enolase family. Requires Mg(2+) as cofactor.

The protein resides in the cytoplasm. The protein localises to the secreted. Its subcellular location is the cell surface. The catalysed reaction is (2R)-2-phosphoglycerate = phosphoenolpyruvate + H2O. It functions in the pathway carbohydrate degradation; glycolysis; pyruvate from D-glyceraldehyde 3-phosphate: step 4/5. Functionally, catalyzes the reversible conversion of 2-phosphoglycerate (2-PG) into phosphoenolpyruvate (PEP). It is essential for the degradation of carbohydrates via glycolysis. This Micrococcus luteus (strain ATCC 4698 / DSM 20030 / JCM 1464 / CCM 169 / CCUG 5858 / IAM 1056 / NBRC 3333 / NCIMB 9278 / NCTC 2665 / VKM Ac-2230) (Micrococcus lysodeikticus) protein is Enolase.